Here is a 444-residue protein sequence, read N- to C-terminus: Beta-D-glucosyl crocetin beta-1,6-glucosyltransferase (444 aa).

His-9 functions as the Proton acceptor in the catalytic mechanism. An anthocyanidin is bound at residue His-9. Catalysis depends on Asp-108, which acts as the Charge relay. Positions 130, 319, 321, 336, 339, 340, 341, 344, 360, and 361 each coordinate UDP-alpha-D-glucose.

Belongs to the UDP-glycosyltransferase family. As to expression, ubiquitous.

The catalysed reaction is beta-D-glucosyl crocetin + UDP-alpha-D-glucose = beta-D-gentiobiosyl crocetin + UDP + H(+). The enzyme catalyses bis(beta-D-glucosyl) crocetin + UDP-alpha-D-glucose = beta-D-gentiobiosyl beta-D-glucosyl crocetin + UDP + H(+). It catalyses the reaction beta-D-gentiobiosyl beta-D-glucosyl crocetin + UDP-alpha-D-glucose = bis(beta-D-gentiobiosyl) crocetin + UDP + H(+). Its function is as follows. Glucosyltransferase catalyzing the beta 1-6 glucosylation of the sugar moiety of crocetin glucosyl esters to produce crocetin gentiobiosyl esters. Weak activity toward curcumin glucosides, but no activity with flavonoid glucosides, coumarin glucosides, 4-nitrophenyl glucoside or crocetin. Involved with UGT75L6 in sequential glycosylation of crocetin to crocin (bis(beta-D-gentiobiosyl) crocetin). This Gardenia jasminoides (Cape jasmine) protein is Beta-D-glucosyl crocetin beta-1,6-glucosyltransferase (UGT94E5).